The chain runs to 952 residues: Lysosomal alpha-glucosidase (952 aa).

Positions Met-1–Leu-27 are cleaved as a signal peptide. Positions Gly-28–Gln-69 are excised as a propeptide. A disordered region spans residues Pro-47–Cys-82. A P-type domain is found at Thr-80–Pro-131. Disulfide bonds link Cys-82–Cys-109, Cys-92–Cys-108, and Cys-103–Cys-127. 3 N-linked (GlcNAc...) asparagine glycosylation sites follow: Asn-140, Asn-233, and Asn-390. Residue Asp-404 coordinates substrate. N-linked (GlcNAc...) asparagine glycosylation occurs at Asn-470. Asp-518 functions as the Nucleophile in the catalytic mechanism. Residue Glu-521 is part of the active site. The cysteines at positions 533 and 558 are disulfide-linked. Substrate-binding residues include Arg-600 and Asp-616. Residues Cys-647 and Cys-658 are joined by a disulfide bond. A glycan (N-linked (GlcNAc...) asparagine) is linked at Asn-652. Residue His-674 participates in substrate binding. Residues Asn-882 and Asn-925 are each glycosylated (N-linked (GlcNAc...) asparagine).

Belongs to the glycosyl hydrolase 31 family. Post-translationally, the different forms of acid glucosidase are obtained by proteolytic processing. In terms of processing, phosphorylation of mannose residues ensures efficient transport of the enzyme to the lysosomes via the mannose 6-phosphate receptor.

The protein localises to the lysosome. The protein resides in the lysosome membrane. It catalyses the reaction Hydrolysis of terminal, non-reducing (1-&gt;4)-linked alpha-D-glucose residues with release of alpha-D-glucose.. Functionally, essential for the degradation of glycogen in lysosomes. Has highest activity on alpha-1,4-linked glycosidic linkages, but can also hydrolyze alpha-1,6-linked glucans. The sequence is that of Lysosomal alpha-glucosidase (GAA) from Homo sapiens (Human).